The following is a 319-amino-acid chain: Lipoyl synthase (319 aa).

The disordered stretch occupies residues 1–28; the sequence is MVVLVDTVSSTPVRPRHPEKAARPDALS. Over residues 16–28 the composition is skewed to basic and acidic residues; sequence RHPEKAARPDALS. The [4Fe-4S] cluster site is built by cysteine 61, cysteine 66, cysteine 72, cysteine 87, cysteine 91, cysteine 94, and serine 300. The region spanning 73–289 is the Radical SAM core domain; sequence WDKKHATFMI…AKTAYAKGFL (217 aa).

This sequence belongs to the radical SAM superfamily. Lipoyl synthase family. Requires [4Fe-4S] cluster as cofactor.

The protein resides in the cytoplasm. The enzyme catalyses [[Fe-S] cluster scaffold protein carrying a second [4Fe-4S](2+) cluster] + N(6)-octanoyl-L-lysyl-[protein] + 2 oxidized [2Fe-2S]-[ferredoxin] + 2 S-adenosyl-L-methionine + 4 H(+) = [[Fe-S] cluster scaffold protein] + N(6)-[(R)-dihydrolipoyl]-L-lysyl-[protein] + 4 Fe(3+) + 2 hydrogen sulfide + 2 5'-deoxyadenosine + 2 L-methionine + 2 reduced [2Fe-2S]-[ferredoxin]. The protein operates within protein modification; protein lipoylation via endogenous pathway; protein N(6)-(lipoyl)lysine from octanoyl-[acyl-carrier-protein]: step 2/2. Its function is as follows. Catalyzes the radical-mediated insertion of two sulfur atoms into the C-6 and C-8 positions of the octanoyl moiety bound to the lipoyl domains of lipoate-dependent enzymes, thereby converting the octanoylated domains into lipoylated derivatives. This is Lipoyl synthase from Rhodopseudomonas palustris (strain HaA2).